A 318-amino-acid chain; its full sequence is Bis(5'-nucleosyl)-tetraphosphatase, symmetrical (318 aa).

Residues 269–318 (PGREVTGPAPVARAPRRPRERQGRQRSRGNRGNAGNAAAGPKPSVDTPQD) form a disordered region. Residues 282-297 (APRRPRERQGRQRSRG) show a composition bias toward basic residues. Positions 298 to 311 (NRGNAGNAAAGPKP) are enriched in low complexity.

This sequence belongs to the Ap4A hydrolase family.

The enzyme catalyses P(1),P(4)-bis(5'-adenosyl) tetraphosphate + H2O = 2 ADP + 2 H(+). In terms of biological role, hydrolyzes diadenosine 5',5'''-P1,P4-tetraphosphate to yield ADP. This is Bis(5'-nucleosyl)-tetraphosphatase, symmetrical from Xanthomonas euvesicatoria pv. vesicatoria (strain 85-10) (Xanthomonas campestris pv. vesicatoria).